We begin with the raw amino-acid sequence, 49 residues long: Large ribosomal subunit protein bL33A (49 aa).

Belongs to the bacterial ribosomal protein bL33 family.

The protein is Large ribosomal subunit protein bL33A of Limosilactobacillus reuteri subsp. reuteri (strain JCM 1112) (Lactobacillus reuteri).